The primary structure comprises 451 residues: MAHIQFDYSKALSFFGEHEVAYMREAVRAAHKALHEKTGQGNDFLGWIDLPVDYDKEEFARIQKAAEKIRHDSDVLLVVGIGGSYLGARAAIEALNHSFFNQLPKEKRNAPQVIFVGQNISSTYLSDVLDLLDGKDVSVNVISKSGTTTEPAIAFRVFRDYLEKKYGKEEARKRIYATTDKERGALKTLANEEGYESFVIPDDVGGRFSVLTAVGLLPIAVSGLAIEDMMKGAADAREAFSTGELSENAAYQYAAIRNILYNKGKTIELLVNYEPHLHYVSEWWKQLFGESEGKDQKGIYPASVDFSTDLHSMGQYVQDGRRNLFETVLHVEAVDKHITIEEAESDLDGLNYLAGKTMDFVNKQAFKGTMLAHTDGNVPNLVVSIPKLDEYSFGYLVYFFEKAVAMSGYLLGVNPFDQPGVEAYKKNMFALLGKPGFEEEKNKLESRLTDN.

Thr38 bears the Phosphothreonine mark. Catalysis depends on Glu290, which acts as the Proton donor. Catalysis depends on residues His311 and Lys425.

The protein belongs to the GPI family.

The protein localises to the cytoplasm. It catalyses the reaction alpha-D-glucose 6-phosphate = beta-D-fructose 6-phosphate. It participates in carbohydrate biosynthesis; gluconeogenesis. The protein operates within carbohydrate degradation; glycolysis; D-glyceraldehyde 3-phosphate and glycerone phosphate from D-glucose: step 2/4. In terms of biological role, catalyzes the reversible isomerization of glucose-6-phosphate to fructose-6-phosphate. This chain is Glucose-6-phosphate isomerase, found in Shouchella clausii (strain KSM-K16) (Alkalihalobacillus clausii).